Here is a 171-residue protein sequence, read N- to C-terminus: UPF0763 protein HPP12_0677 (171 aa).

The protein belongs to the UPF0763 family.

The sequence is that of UPF0763 protein HPP12_0677 from Helicobacter pylori (strain P12).